The primary structure comprises 367 residues: Glutamate 5-kinase (367 aa).

K9 is a binding site for ATP. The substrate site is built by S49, D136, and N148. ATP is bound by residues 168 to 169 (TD) and 210 to 216 (TGGMKSK). In terms of domain architecture, PUA spans 276-350 (SGQIEVDAGA…GMQSQDIQVR (75 aa)).

This sequence belongs to the glutamate 5-kinase family.

Its subcellular location is the cytoplasm. The catalysed reaction is L-glutamate + ATP = L-glutamyl 5-phosphate + ADP. It functions in the pathway amino-acid biosynthesis; L-proline biosynthesis; L-glutamate 5-semialdehyde from L-glutamate: step 1/2. In terms of biological role, catalyzes the transfer of a phosphate group to glutamate to form L-glutamate 5-phosphate. The sequence is that of Glutamate 5-kinase from Bacillus cereus (strain G9842).